The sequence spans 58 residues: Small ribosomal subunit protein bS21 (58 aa).

Residues 32–42 (ARRREHYEKPS) are compositionally biased toward basic and acidic residues. The disordered stretch occupies residues 32–58 (ARRREHYEKPSVRRKKKSEAARKRRWH). Residues 43–58 (VRRKKKSEAARKRRWH) are compositionally biased toward basic residues.

This sequence belongs to the bacterial ribosomal protein bS21 family.

This chain is Small ribosomal subunit protein bS21, found in Moorella thermoacetica (strain ATCC 39073 / JCM 9320).